A 252-amino-acid chain; its full sequence is Imidazole glycerol phosphate synthase subunit HisF (252 aa).

Catalysis depends on residues Asp-11 and Asp-130.

The protein belongs to the HisA/HisF family. As to quaternary structure, heterodimer of HisH and HisF.

The protein localises to the cytoplasm. It carries out the reaction 5-[(5-phospho-1-deoxy-D-ribulos-1-ylimino)methylamino]-1-(5-phospho-beta-D-ribosyl)imidazole-4-carboxamide + L-glutamine = D-erythro-1-(imidazol-4-yl)glycerol 3-phosphate + 5-amino-1-(5-phospho-beta-D-ribosyl)imidazole-4-carboxamide + L-glutamate + H(+). It functions in the pathway amino-acid biosynthesis; L-histidine biosynthesis; L-histidine from 5-phospho-alpha-D-ribose 1-diphosphate: step 5/9. Functionally, IGPS catalyzes the conversion of PRFAR and glutamine to IGP, AICAR and glutamate. The HisF subunit catalyzes the cyclization activity that produces IGP and AICAR from PRFAR using the ammonia provided by the HisH subunit. The chain is Imidazole glycerol phosphate synthase subunit HisF from Bacillus cereus (strain G9842).